A 264-amino-acid polypeptide reads, in one-letter code: Indole-3-glycerol phosphate synthase (264 aa).

It belongs to the TrpC family.

The catalysed reaction is 1-(2-carboxyphenylamino)-1-deoxy-D-ribulose 5-phosphate + H(+) = (1S,2R)-1-C-(indol-3-yl)glycerol 3-phosphate + CO2 + H2O. It participates in amino-acid biosynthesis; L-tryptophan biosynthesis; L-tryptophan from chorismate: step 4/5. The sequence is that of Indole-3-glycerol phosphate synthase from Xylella fastidiosa (strain M12).